The chain runs to 220 residues: Ribose-5-phosphate isomerase A (220 aa).

Substrate is bound by residues 28–31, 81–84, and 94–97; these read TGST, DGAD, and KGGG. Glu-103 serves as the catalytic Proton acceptor. Lys-121 contacts substrate.

This sequence belongs to the ribose 5-phosphate isomerase family. In terms of assembly, homodimer.

The enzyme catalyses aldehydo-D-ribose 5-phosphate = D-ribulose 5-phosphate. It functions in the pathway carbohydrate degradation; pentose phosphate pathway; D-ribose 5-phosphate from D-ribulose 5-phosphate (non-oxidative stage): step 1/1. In terms of biological role, catalyzes the reversible conversion of ribose-5-phosphate to ribulose 5-phosphate. This is Ribose-5-phosphate isomerase A from Coxiella burnetii (strain CbuK_Q154) (Coxiella burnetii (strain Q154)).